Reading from the N-terminus, the 336-residue chain is Anthranilate phosphoribosyltransferase (336 aa).

5-phospho-alpha-D-ribose 1-diphosphate contacts are provided by residues G80, 83–84, T88, 90–93, 108–116, and S120; these read GD, NIST, and KHGNRSITS. Residue G80 coordinates anthranilate. Position 92 (S92) interacts with Mg(2+). N111 serves as a coordination point for anthranilate. R166 contacts anthranilate. Mg(2+) contacts are provided by D224 and E225.

The protein belongs to the anthranilate phosphoribosyltransferase family. In terms of assembly, homodimer. Mg(2+) is required as a cofactor.

The enzyme catalyses N-(5-phospho-beta-D-ribosyl)anthranilate + diphosphate = 5-phospho-alpha-D-ribose 1-diphosphate + anthranilate. It participates in amino-acid biosynthesis; L-tryptophan biosynthesis; L-tryptophan from chorismate: step 2/5. Catalyzes the transfer of the phosphoribosyl group of 5-phosphorylribose-1-pyrophosphate (PRPP) to anthranilate to yield N-(5'-phosphoribosyl)-anthranilate (PRA). This Caldicellulosiruptor saccharolyticus (strain ATCC 43494 / DSM 8903 / Tp8T 6331) protein is Anthranilate phosphoribosyltransferase.